A 29-amino-acid polypeptide reads, in one-letter code: M-poneritoxin-Ng3d (29 aa).

As to expression, expressed by the venom gland.

The protein resides in the secreted. Functionally, has activity against some Gram-positive bacteria and S.cerevisiae. Has a non-hemolytic activity. This chain is M-poneritoxin-Ng3d, found in Neoponera goeldii (Ponerine ant).